Reading from the N-terminus, the 130-residue chain is Phosphomevalonate dehydratase small subunit (130 aa).

Ser62 (proton acceptor) is an active-site residue.

This sequence belongs to the AcnX type II small subunit family. In terms of assembly, heterodimer composed of a large subunit (PMDh-L) and a small subunit (PMDh-S).

It carries out the reaction (R)-5-phosphomevalonate = (2E)-3-methyl-5-phosphooxypent-2-enoate + H2O. The protein operates within isoprenoid biosynthesis; isopentenyl diphosphate biosynthesis via mevalonate pathway. Component of a hydro-lyase that catalyzes the dehydration of mevalonate 5-phosphate (MVA5P) to form trans-anhydromevalonate 5-phosphate (tAHMP). Involved in the archaeal mevalonate (MVA) pathway, which provides fundamental precursors for isoprenoid biosynthesis, such as isopentenyl diphosphate (IPP) and dimethylallyl diphosphate (DMAPP). This chain is Phosphomevalonate dehydratase small subunit, found in Pyrococcus abyssi (strain GE5 / Orsay).